The primary structure comprises 323 residues: Acetyl-coenzyme A carboxylase carboxyl transferase subunit alpha (323 aa).

Positions 39–293 (RLAGKSQQLT…KRSLAESLRQ (255 aa)) constitute a CoA carboxyltransferase C-terminal domain.

This sequence belongs to the AccA family. Acetyl-CoA carboxylase is a heterohexamer composed of biotin carboxyl carrier protein (AccB), biotin carboxylase (AccC) and two subunits each of ACCase subunit alpha (AccA) and ACCase subunit beta (AccD).

The protein resides in the cytoplasm. It catalyses the reaction N(6)-carboxybiotinyl-L-lysyl-[protein] + acetyl-CoA = N(6)-biotinyl-L-lysyl-[protein] + malonyl-CoA. Its pathway is lipid metabolism; malonyl-CoA biosynthesis; malonyl-CoA from acetyl-CoA: step 1/1. Functionally, component of the acetyl coenzyme A carboxylase (ACC) complex. First, biotin carboxylase catalyzes the carboxylation of biotin on its carrier protein (BCCP) and then the CO(2) group is transferred by the carboxyltransferase to acetyl-CoA to form malonyl-CoA. This is Acetyl-coenzyme A carboxylase carboxyl transferase subunit alpha from Cupriavidus metallidurans (strain ATCC 43123 / DSM 2839 / NBRC 102507 / CH34) (Ralstonia metallidurans).